Reading from the N-terminus, the 237-residue chain is Large ribosomal subunit protein uL1 (237 aa).

This sequence belongs to the universal ribosomal protein uL1 family. As to quaternary structure, part of the 50S ribosomal subunit.

Functionally, binds directly to 23S rRNA. The L1 stalk is quite mobile in the ribosome, and is involved in E site tRNA release. Its function is as follows. Protein L1 is also a translational repressor protein, it controls the translation of the L11 operon by binding to its mRNA. The protein is Large ribosomal subunit protein uL1 of Dehalococcoides mccartyi (strain CBDB1).